A 108-amino-acid polypeptide reads, in one-letter code: UPF0145 protein alr2488 (108 aa).

Belongs to the UPF0145 family.

This chain is UPF0145 protein alr2488, found in Nostoc sp. (strain PCC 7120 / SAG 25.82 / UTEX 2576).